A 330-amino-acid chain; its full sequence is Polygalacturonase inhibitor 1 (330 aa).

The N-terminal stretch at 1-21 (MDKTATLCLLFLFTFLTTCLS) is a signal peptide. Cystine bridges form between cysteine 25–cysteine 55 and cysteine 56–cysteine 63. 10 LRR repeats span residues 69–93 (NHRV…VGDL), 94–117 (PYLE…TIAK), 118–142 (LKNL…ISQL), 143–166 (KNLE…LSTL), 167–189 (PKIL…SFGS), 191–215 (PGTV…LGNI), 217–237 (FNRI…LFGS), 238–260 (NKTT…KVDI), 261–285 (PKTL…WTEA), and 287–309 (LQFF…KLQT). N-linked (GlcNAc...) asparagine glycosylation is found at asparagine 106 and asparagine 130. Residue asparagine 238 is glycosylated (N-linked (GlcNAc...) asparagine). An N-linked (GlcNAc...) asparagine glycan is attached at asparagine 291. Cystine bridges form between cysteine 298-cysteine 320 and cysteine 322-cysteine 329.

The protein belongs to the polygalacturonase-inhibiting protein family.

The protein localises to the secreted. The protein resides in the cell wall. Its subcellular location is the membrane. Functionally, inhibitor of fungal polygalacturonase. It is an important factor for plant resistance to phytopathogenic fungi. This chain is Polygalacturonase inhibitor 1 (PGIP1), found in Arabidopsis thaliana (Mouse-ear cress).